Here is a 147-residue protein sequence, read N- to C-terminus: Ubiquitin-conjugating enzyme E2-16 kDa (147 aa).

One can recognise a UBC core domain in the interval 1–147 (MAFKRINKEL…AREWTRKYAI (147 aa)). Cys107 serves as the catalytic Glycyl thioester intermediate.

The protein belongs to the ubiquitin-conjugating enzyme family.

It carries out the reaction S-ubiquitinyl-[E1 ubiquitin-activating enzyme]-L-cysteine + [E2 ubiquitin-conjugating enzyme]-L-cysteine = [E1 ubiquitin-activating enzyme]-L-cysteine + S-ubiquitinyl-[E2 ubiquitin-conjugating enzyme]-L-cysteine.. It participates in protein modification; protein ubiquitination. Functionally, catalyzes the covalent attachment of ubiquitin to other proteins. May also mediate selective proteolysis pathways. The polypeptide is Ubiquitin-conjugating enzyme E2-16 kDa (UBC1) (Colletotrichum gloeosporioides (Anthracnose fungus)).